A 335-amino-acid polypeptide reads, in one-letter code: Methylthioribose-1-phosphate isomerase (335 aa).

Substrate contacts are provided by residues 43 to 45 (RGA), Arg86, and Gln193. Asp234 (proton donor) is an active-site residue. 244–245 (NK) provides a ligand contact to substrate.

It belongs to the eIF-2B alpha/beta/delta subunits family. MtnA subfamily.

The enzyme catalyses 5-(methylsulfanyl)-alpha-D-ribose 1-phosphate = 5-(methylsulfanyl)-D-ribulose 1-phosphate. It participates in amino-acid biosynthesis; L-methionine biosynthesis via salvage pathway; L-methionine from S-methyl-5-thio-alpha-D-ribose 1-phosphate: step 1/6. In terms of biological role, catalyzes the interconversion of methylthioribose-1-phosphate (MTR-1-P) into methylthioribulose-1-phosphate (MTRu-1-P). This is Methylthioribose-1-phosphate isomerase from Parabacteroides distasonis (strain ATCC 8503 / DSM 20701 / CIP 104284 / JCM 5825 / NCTC 11152).